The sequence spans 71 residues: Conotoxin Ca5.1 (71 aa).

Positions 1 to 19 (MRCVPVFIILLLLASPAAS) are cleaved as a signal peptide. Residues 20–56 (DPLEKRIQSDLIRAALEDADTKNDPRILEDIVSTALA) constitute a propeptide that is removed on maturation.

The protein belongs to the conotoxin T superfamily. In terms of processing, contains 2 disulfide bonds that can be either 'C1-C3, C2-C4' or 'C1-C4, C2-C3', since these disulfide connectivities have been observed for conotoxins with cysteine framework V (for examples, see AC P0DQQ7 and AC P81755). Expressed by the venom duct.

The protein resides in the secreted. This Conus caracteristicus (Characteristic cone) protein is Conotoxin Ca5.1.